The primary structure comprises 439 residues: tRNA-2-methylthio-N(6)-dimethylallyladenosine synthase (439 aa).

Positions 2–116 constitute an MTTase N-terminal domain; it reads LKVYIETMGC…ISQVIHKEKA (115 aa). [4Fe-4S] cluster contacts are provided by C11, C47, C79, C149, C153, and C156. The region spanning 135 to 368 is the Radical SAM core domain; it reads KKAEVRSLLN…QNRHKEILEE (234 aa). A TRAM domain is found at 371–437; it reads RLEVGKTHVV…KGRLMATTKN (67 aa).

Belongs to the methylthiotransferase family. MiaB subfamily. As to quaternary structure, monomer. The cofactor is [4Fe-4S] cluster.

It is found in the cytoplasm. It catalyses the reaction N(6)-dimethylallyladenosine(37) in tRNA + (sulfur carrier)-SH + AH2 + 2 S-adenosyl-L-methionine = 2-methylsulfanyl-N(6)-dimethylallyladenosine(37) in tRNA + (sulfur carrier)-H + 5'-deoxyadenosine + L-methionine + A + S-adenosyl-L-homocysteine + 2 H(+). Its function is as follows. Catalyzes the methylthiolation of N6-(dimethylallyl)adenosine (i(6)A), leading to the formation of 2-methylthio-N6-(dimethylallyl)adenosine (ms(2)i(6)A) at position 37 in tRNAs that read codons beginning with uridine. The sequence is that of tRNA-2-methylthio-N(6)-dimethylallyladenosine synthase from Helicobacter acinonychis (strain Sheeba).